Here is an 87-residue protein sequence, read N- to C-terminus: Small ribosomal subunit protein uS17 (87 aa).

The protein belongs to the universal ribosomal protein uS17 family. Part of the 30S ribosomal subunit.

Functionally, one of the primary rRNA binding proteins, it binds specifically to the 5'-end of 16S ribosomal RNA. The chain is Small ribosomal subunit protein uS17 from Onion yellows phytoplasma (strain OY-M).